The primary structure comprises 134 residues: Small ribosomal subunit protein uS8 (134 aa).

Belongs to the universal ribosomal protein uS8 family. As to quaternary structure, part of the 30S ribosomal subunit. Contacts proteins S5 and S12.

Its function is as follows. One of the primary rRNA binding proteins, it binds directly to 16S rRNA central domain where it helps coordinate assembly of the platform of the 30S subunit. This is Small ribosomal subunit protein uS8 from Nitratiruptor sp. (strain SB155-2).